Reading from the N-terminus, the 241-residue chain is Phosphoribosyl isomerase A (241 aa).

Asp11 serves as the catalytic Proton acceptor. Asp130 serves as the catalytic Proton donor.

The protein belongs to the HisA/HisF family.

It localises to the cytoplasm. The catalysed reaction is 1-(5-phospho-beta-D-ribosyl)-5-[(5-phospho-beta-D-ribosylamino)methylideneamino]imidazole-4-carboxamide = 5-[(5-phospho-1-deoxy-D-ribulos-1-ylimino)methylamino]-1-(5-phospho-beta-D-ribosyl)imidazole-4-carboxamide. The enzyme catalyses N-(5-phospho-beta-D-ribosyl)anthranilate = 1-(2-carboxyphenylamino)-1-deoxy-D-ribulose 5-phosphate. It functions in the pathway amino-acid biosynthesis; L-histidine biosynthesis; L-histidine from 5-phospho-alpha-D-ribose 1-diphosphate: step 4/9. It participates in amino-acid biosynthesis; L-tryptophan biosynthesis; L-tryptophan from chorismate: step 3/5. Involved in both the histidine and tryptophan biosynthetic pathways. The chain is Phosphoribosyl isomerase A from Streptomyces griseus subsp. griseus (strain JCM 4626 / CBS 651.72 / NBRC 13350 / KCC S-0626 / ISP 5235).